Here is a 406-residue protein sequence, read N- to C-terminus: 5-hydroxytryptamine receptor 4 (406 aa).

At Met-1 to Lys-19 the chain is on the extracellular side. The N-linked (GlcNAc...) asparagine glycan is linked to Asn-7. The helical transmembrane segment at Val-20–Val-44 threads the bilayer. Residues Cys-45–Lys-54 are Cytoplasmic-facing. Residues Thr-55 to Ala-78 form a helical membrane-spanning segment. Residues Ile-79–Phe-92 are Extracellular-facing. Residues Cys-93–Asp-117 form a helical membrane-spanning segment. The cysteines at positions 93 and 184 are disulfide-linked. Residue Asp-100 participates in serotonin binding. Residues Arg-118 to Met-133 are Cytoplasmic-facing. The chain crosses the membrane as a helical span at residues Thr-134–Ile-157. At Met-158–Val-188 the chain is on the extracellular side. A helical membrane pass occupies residues Asn-189–Tyr-212. Residues Tyr-213 to Ala-257 lie on the Cytoplasmic side of the membrane. A helical transmembrane segment spans residues Ala-258–Pro-283. Asn-279 provides a ligand contact to serotonin. Residues Phe-284–Pro-290 are Extracellular-facing. Residues Glu-291–Phe-314 form a helical membrane-spanning segment. Over Leu-315–Ser-406 the chain is Cytoplasmic.

This sequence belongs to the G-protein coupled receptor 1 family. Interacts (via C-terminus 330-346 AA) with GRK5; this interaction is promoted by 5-HT (serotonin). In terms of tissue distribution, in brain, isoform 5-HT4S is restricted to the striatum. In peripheral tissues, differential expression is also observed in the atrium of the heart where only isoform 5-HT4S is detectable. As to expression, in brain, isoform 5-HT4L is expressed throughout the brain, except in the cerebellum.

The protein resides in the cell membrane. It localises to the endosome membrane. Its function is as follows. G-protein coupled receptor for 5-hydroxytryptamine (serotonin), a biogenic hormone that functions as a neurotransmitter, a hormone and a mitogen. Ligand binding causes a conformation change that triggers signaling via guanine nucleotide-binding proteins (G proteins) and modulates the activity of downstream effectors. HTR4 is coupled to G(s) G alpha proteins and mediates activation of adenylate cyclase activity. This is 5-hydroxytryptamine receptor 4 (Htr4) from Rattus norvegicus (Rat).